The sequence spans 207 residues: Large ribosomal subunit protein bL25 (207 aa).

Belongs to the bacterial ribosomal protein bL25 family. CTC subfamily. Part of the 50S ribosomal subunit; part of the 5S rRNA/L5/L18/L25 subcomplex. Contacts the 5S rRNA. Binds to the 5S rRNA independently of L5 and L18.

Functionally, this is one of the proteins that binds to the 5S RNA in the ribosome where it forms part of the central protuberance. The chain is Large ribosomal subunit protein bL25 from Dictyoglomus turgidum (strain DSM 6724 / Z-1310).